The chain runs to 86 residues: Cytochrome c oxidase subunit 3 (86 aa).

Residues 1 to 15 lie on the Mitochondrial matrix side of the membrane; sequence MAHQAHSYHMVDPSP. A helical membrane pass occupies residues 16-34; that stretch reads WPIFGAAAALLTTSGLVMW. The Mitochondrial intermembrane portion of the chain corresponds to 35-40; the sequence is FHYNSS. The chain crosses the membrane as a helical span at residues 41–66; it reads ILLAAGLLSMLLVMLQWWREIVREST. Residues 67-86 lie on the Mitochondrial matrix side of the membrane; it reads FQGHHTPTVQKGLRYGMILF.

It belongs to the cytochrome c oxidase subunit 3 family. As to quaternary structure, component of the cytochrome c oxidase (complex IV, CIV), a multisubunit enzyme composed of 14 subunits. The complex is composed of a catalytic core of 3 subunits MT-CO1, MT-CO2 and MT-CO3, encoded in the mitochondrial DNA, and 11 supernumerary subunits COX4I, COX5A, COX5B, COX6A, COX6B, COX6C, COX7A, COX7B, COX7C, COX8 and NDUFA4, which are encoded in the nuclear genome. The complex exists as a monomer or a dimer and forms supercomplexes (SCs) in the inner mitochondrial membrane with NADH-ubiquinone oxidoreductase (complex I, CI) and ubiquinol-cytochrome c oxidoreductase (cytochrome b-c1 complex, complex III, CIII), resulting in different assemblies (supercomplex SCI(1)III(2)IV(1) and megacomplex MCI(2)III(2)IV(2)).

The protein localises to the mitochondrion inner membrane. It carries out the reaction 4 Fe(II)-[cytochrome c] + O2 + 8 H(+)(in) = 4 Fe(III)-[cytochrome c] + 2 H2O + 4 H(+)(out). Component of the cytochrome c oxidase, the last enzyme in the mitochondrial electron transport chain which drives oxidative phosphorylation. The respiratory chain contains 3 multisubunit complexes succinate dehydrogenase (complex II, CII), ubiquinol-cytochrome c oxidoreductase (cytochrome b-c1 complex, complex III, CIII) and cytochrome c oxidase (complex IV, CIV), that cooperate to transfer electrons derived from NADH and succinate to molecular oxygen, creating an electrochemical gradient over the inner membrane that drives transmembrane transport and the ATP synthase. Cytochrome c oxidase is the component of the respiratory chain that catalyzes the reduction of oxygen to water. Electrons originating from reduced cytochrome c in the intermembrane space (IMS) are transferred via the dinuclear copper A center (CU(A)) of subunit 2 and heme A of subunit 1 to the active site in subunit 1, a binuclear center (BNC) formed by heme A3 and copper B (CU(B)). The BNC reduces molecular oxygen to 2 water molecules using 4 electrons from cytochrome c in the IMS and 4 protons from the mitochondrial matrix. The sequence is that of Cytochrome c oxidase subunit 3 (MT-CO3) from Anas platyrhynchos (Mallard).